The following is a 492-amino-acid chain: Phosphatidylinositol-glycan biosynthesis class W protein (492 aa).

The next 5 helical transmembrane spans lie at 26–46 (FILT…ATFF), 59–79 (FILE…FTEL), 82–102 (FLIV…QKNV), 127–147 (YRAF…FQVF), and 156–176 (TYGI…GALV). The interval 185 to 216 (IEKQQKKKREEEEDDNDKINKTSSSSSSSSSA) is disordered. The N-linked (GlcNAc...) asparagine glycan is linked to N204. Residues 205–216 (KTSSSSSSSSSA) are compositionally biased toward low complexity. Residues 264-284 (YGLHWNFFFTLGFVSISLAFL) form a helical membrane-spanning segment. N289 is a glycosylation site (N-linked (GlcNAc...) asparagine). A run of 4 helical transmembrane segments spans residues 290-310 (ISAI…NSFG), 331-351 (ICSF…GTEL), 364-384 (FATK…LCEI), and 399-419 (VLAI…ITLI). A glycan (N-linked (GlcNAc...) asparagine) is linked at N424. The next 2 membrane-spanning stretches (helical) occupy residues 437–457 (LFIF…MKTI) and 464–484 (SMII…ILDY).

The protein belongs to the PIGW family.

It localises to the endoplasmic reticulum membrane. It functions in the pathway glycolipid biosynthesis; glycosylphosphatidylinositol-anchor biosynthesis. Probable acetyltransferase, which acetylates the inositol ring of phosphatidylinositol during biosynthesis of GPI-anchor. The sequence is that of Phosphatidylinositol-glycan biosynthesis class W protein from Dictyostelium discoideum (Social amoeba).